The primary structure comprises 66 residues: UPF0434 protein M446_0487 (66 aa).

The protein belongs to the UPF0434 family.

The chain is UPF0434 protein M446_0487 from Methylobacterium sp. (strain 4-46).